Here is a 421-residue protein sequence, read N- to C-terminus: 2-deoxystreptamine N-acetyl-D-glucosaminyltransferase (421 aa).

It belongs to the glycosyltransferase group 1 family. Glycosyltransferase 4 subfamily.

It carries out the reaction 2-deoxystreptamine + UDP-N-acetyl-alpha-D-glucosamine = 2'-N-acetylparomamine + UDP + H(+). Its pathway is antibiotic biosynthesis; neomycin biosynthesis. Its function is as follows. Glycosyltransferase involved in the biosynthesis of neomycin by mediating conversion of 2-deoxystreptamine (2-DOS) to 2'-N-acetylparomamine using UDP-alpha-D-glucosamine as sugar donor. This is 2-deoxystreptamine N-acetyl-D-glucosaminyltransferase (neoD) from Streptomyces fradiae (Streptomyces roseoflavus).